A 131-amino-acid polypeptide reads, in one-letter code: Large ribosomal subunit protein bL17 (131 aa).

Belongs to the bacterial ribosomal protein bL17 family. As to quaternary structure, part of the 50S ribosomal subunit. Contacts protein L32.

This is Large ribosomal subunit protein bL17 from Chromobacterium violaceum (strain ATCC 12472 / DSM 30191 / JCM 1249 / CCUG 213 / NBRC 12614 / NCIMB 9131 / NCTC 9757 / MK).